We begin with the raw amino-acid sequence, 84 residues long: Toluene-4-monooxygenase system, hydroxylase component subunit gamma (84 aa).

It belongs to the TmoB/XamoB family. As to quaternary structure, the alkene monooxygenase multicomponent enzyme system is composed of an electron transfer component and a monooxygenase component interacting with the effector protein TmoD. The electron transfer component is composed of a ferredoxin reductase (TmoF) and a ferredoxin (TmoC), and the monooxygenase component is formed by a heterohexamer (dimer of heterotrimers) of two alpha subunits (TmoA), two beta subunits (TmoE) and two gamma subunits (TmoB).

The catalysed reaction is toluene + NADH + O2 + H(+) = 4-methylphenol + NAD(+) + H2O. It functions in the pathway xenobiotic degradation; toluene degradation. With respect to regulation, inhibited by Zn(2+) and Cu(2+). Its function is as follows. Component of the toluene-4-monooxygenase multicomponent enzyme system which catalyzes the O2- and NADH-dependent hydroxylation of toluene to form p-cresol. Also able to convert benzene to phenol, catechol, and 1,2,3-trihydroxybenzene by successive hydroxylations. The sequence is that of Toluene-4-monooxygenase system, hydroxylase component subunit gamma from Ectopseudomonas mendocina (Pseudomonas mendocina).